We begin with the raw amino-acid sequence, 129 residues long: uncharacterized protein (129 aa).

This is an uncharacterized protein from Invertebrate iridescent virus 6 (IIV-6).